A 119-amino-acid polypeptide reads, in one-letter code: MARVKGGVVSRKRRKRVLKLAKGYYGAKHILFRTAKEQVMNSYYYAYRDRRQKKRDFRKLWITRINAAARMNGLSYSQLMHGLKLAEIEVNRKMLADLAVNDAAAFTALADAAKAKLGK.

Belongs to the bacterial ribosomal protein bL20 family.

In terms of biological role, binds directly to 23S ribosomal RNA and is necessary for the in vitro assembly process of the 50S ribosomal subunit. It is not involved in the protein synthesizing functions of that subunit. This is Large ribosomal subunit protein bL20 from Streptococcus agalactiae serotype Ia (strain ATCC 27591 / A909 / CDC SS700).